Consider the following 554-residue polypeptide: Glutamine--tRNA ligase (554 aa).

Residues Pro34 to His44 carry the 'HIGH' region motif. ATP contacts are provided by residues Glu35 to Asn37 and His41 to Ser47. Residues Asp67 and Tyr212 each contribute to the L-glutamine site. Residues Thr231, Arg261–Leu262, and Met269–Lys271 each bind ATP. Residues Val268 to Arg272 carry the 'KMSKS' region motif. An interaction with tRNA region spans residues Thr317 to Glu324.

Belongs to the class-I aminoacyl-tRNA synthetase family. As to quaternary structure, monomer.

It is found in the cytoplasm. It catalyses the reaction tRNA(Gln) + L-glutamine + ATP = L-glutaminyl-tRNA(Gln) + AMP + diphosphate. The polypeptide is Glutamine--tRNA ligase (Escherichia coli O17:K52:H18 (strain UMN026 / ExPEC)).